The primary structure comprises 248 residues: 4-hydroxy-tetrahydrodipicolinate reductase (248 aa).

Residues G74 to T76 and S99 to F102 contribute to the NAD(+) site. H134 functions as the Proton donor/acceptor in the catalytic mechanism. H135 provides a ligand contact to (S)-2,3,4,5-tetrahydrodipicolinate. K138 acts as the Proton donor in catalysis. G144–T145 contributes to the (S)-2,3,4,5-tetrahydrodipicolinate binding site.

It belongs to the DapB family.

It localises to the cytoplasm. It catalyses the reaction (S)-2,3,4,5-tetrahydrodipicolinate + NAD(+) + H2O = (2S,4S)-4-hydroxy-2,3,4,5-tetrahydrodipicolinate + NADH + H(+). The catalysed reaction is (S)-2,3,4,5-tetrahydrodipicolinate + NADP(+) + H2O = (2S,4S)-4-hydroxy-2,3,4,5-tetrahydrodipicolinate + NADPH + H(+). Its pathway is amino-acid biosynthesis; L-lysine biosynthesis via DAP pathway; (S)-tetrahydrodipicolinate from L-aspartate: step 4/4. Its function is as follows. Catalyzes the conversion of 4-hydroxy-tetrahydrodipicolinate (HTPA) to tetrahydrodipicolinate. The sequence is that of 4-hydroxy-tetrahydrodipicolinate reductase from Chlorobium phaeobacteroides (strain DSM 266 / SMG 266 / 2430).